A 649-amino-acid chain; its full sequence is MSEAHIYPVKQNIKAHTHADNDTYLAMYQQSIKDPEGFWSEHGKIVDWIKPFTKVKHTSFDPGHIDIRWFEDGTLNVSANCIDRHLATRGDQVAIIWEGDDPTQDKTLTYKQLHQEVCRFANALKEQGVRKGDVVCIYMPMVPEAAVAMLACTRIGAVHTIVFGGFSPEALAGRIIDSNAKLVITADEGVRGGRAVPLKKNVDEALCNPEVKNISKVMVLKRTGGNVAWHEHRDIWWHEATAKASDNCPPEEMKAEDPLFILYTSGSTGKPKGVLHTTGGYLVYATMTFKYVFDYQPNEVFWCTADVGWITGHSYLVYGPLANGAKTILFEGVPNYPTTARMSEVVDKHKVNILYTAPTAIRALMAKGDEAIKGTSRDSLRIMGSVGEPINPEAWEWYYRTIGNEKSPIVDTWWQTETGGILITPLPGATALKPGSATRPFFGVQPALVDNMGEIVEGATEGNLVLLDSWPGQMRTVYGDHDRFEQTYFSTFKGMYFTGDGARRDEDGYYWITGRVDDVLNVSGHRMGTAEIESALVAFNKIAEAAVVGVPHDIKGQAIYAYITLNDGVYPSAELHKEVKDWVRKEIGAIATPDVLHWTDALPKTRSGKIMRRILRKIATGDTSNLGDTSTLADPSVVDRLIAEKAQLK.

Residues 191–194 (RGGR), T311, and N335 contribute to the CoA site. Residues 387-389 (GEP), 411-416 (DTWWQT), D500, and R515 contribute to the ATP site. Position 523 (S523) interacts with CoA. Residue R526 participates in ATP binding. The Mg(2+) site is built by V537, F539, and I542. R584 is a binding site for CoA. Position 609 is an N6-acetyllysine (K609).

This sequence belongs to the ATP-dependent AMP-binding enzyme family. Mg(2+) is required as a cofactor. In terms of processing, acetylated. Deacetylation by the SIR2-homolog deacetylase activates the enzyme.

The catalysed reaction is acetate + ATP + CoA = acetyl-CoA + AMP + diphosphate. Catalyzes the conversion of acetate into acetyl-CoA (AcCoA), an essential intermediate at the junction of anabolic and catabolic pathways. AcsA undergoes a two-step reaction. In the first half reaction, AcsA combines acetate with ATP to form acetyl-adenylate (AcAMP) intermediate. In the second half reaction, it can then transfer the acetyl group from AcAMP to the sulfhydryl group of CoA, forming the product AcCoA. The protein is Acetyl-coenzyme A synthetase of Vibrio cholerae serotype O1 (strain ATCC 39315 / El Tor Inaba N16961).